Here is a 190-residue protein sequence, read N- to C-terminus: MDVGSKEVLMESPPDYTAVPGGRLLIPCCPVNIKRLLIVVVVVVLVVVVIVGALLMGLHMSQKHTEMVLEMSITGPEAQQRLALSERVGTTATFSIGSTGTVVYDYQRLLIAYKPAPGTCCYIMKMAPQNIPSLEALTRKLQNFQAKPQVPSSKLGQEQGHDAGSAFSGDLAFLGRTVSTLCGEVPLYYT.

A propeptide spanning residues 1-24 is cleaved from the precursor; the sequence is MDVGSKEVLMESPPDYTAVPGGRL. 2 S-palmitoyl cysteine lipidation sites follow: cysteine 28 and cysteine 29. A propeptide spanning residues 59-190 is cleaved from the precursor; sequence HMSQKHTEMV…LCGEVPLYYT (132 aa). Positions 94-190 constitute a BRICHOS domain; it reads FSIGSTGTVV…LCGEVPLYYT (97 aa). An intrachain disulfide couples cysteine 121 to cysteine 182.

The protein resides in the secreted. The protein localises to the extracellular space. It is found in the surface film. Functionally, pulmonary surfactant associated proteins promote alveolar stability by lowering the surface tension at the air-liquid interface in the peripheral air spaces. This Bos taurus (Bovine) protein is Surfactant protein C (SFTPC).